Consider the following 119-residue polypeptide: Large ribosomal subunit protein uL18 (119 aa).

The protein belongs to the universal ribosomal protein uL18 family. Part of the 50S ribosomal subunit; part of the 5S rRNA/L5/L18/L25 subcomplex. Contacts the 5S and 23S rRNAs.

Its function is as follows. This is one of the proteins that bind and probably mediate the attachment of the 5S RNA into the large ribosomal subunit, where it forms part of the central protuberance. The polypeptide is Large ribosomal subunit protein uL18 (Clostridium botulinum (strain Okra / Type B1)).